The primary structure comprises 304 residues: Putative S-adenosyl-L-methionine-dependent methyltransferase Mjls_1071 (304 aa).

S-adenosyl-L-methionine is bound by residues Asp-130 and 159-160 (DL).

This sequence belongs to the UPF0677 family.

In terms of biological role, exhibits S-adenosyl-L-methionine-dependent methyltransferase activity. The chain is Putative S-adenosyl-L-methionine-dependent methyltransferase Mjls_1071 from Mycobacterium sp. (strain JLS).